The chain runs to 115 residues: Large ribosomal subunit protein bL19 (115 aa).

Belongs to the bacterial ribosomal protein bL19 family.

This protein is located at the 30S-50S ribosomal subunit interface and may play a role in the structure and function of the aminoacyl-tRNA binding site. The sequence is that of Large ribosomal subunit protein bL19 from Francisella tularensis subsp. tularensis (strain FSC 198).